The sequence spans 211 residues: FMN-dependent NADH:quinone oxidoreductase 2 (211 aa).

102-105 (MWNF) contacts FMN.

Belongs to the azoreductase type 1 family. Homodimer. It depends on FMN as a cofactor.

It catalyses the reaction 2 a quinone + NADH + H(+) = 2 a 1,4-benzosemiquinone + NAD(+). The catalysed reaction is N,N-dimethyl-1,4-phenylenediamine + anthranilate + 2 NAD(+) = 2-(4-dimethylaminophenyl)diazenylbenzoate + 2 NADH + 2 H(+). Quinone reductase that provides resistance to thiol-specific stress caused by electrophilic quinones. Functionally, also exhibits azoreductase activity. Catalyzes the reductive cleavage of the azo bond in aromatic azo compounds to the corresponding amines. This Bacillus cereus (strain ATCC 14579 / DSM 31 / CCUG 7414 / JCM 2152 / NBRC 15305 / NCIMB 9373 / NCTC 2599 / NRRL B-3711) protein is FMN-dependent NADH:quinone oxidoreductase 2.